The primary structure comprises 158 residues: NADPH-dependent 7-cyano-7-deazaguanine reductase (158 aa).

The Thioimide intermediate role is filled by Cys-56. Catalysis depends on Asp-63, which acts as the Proton donor. Substrate-binding positions include 78-80 (VES) and 97-98 (HE).

The protein belongs to the GTP cyclohydrolase I family. QueF type 1 subfamily.

The protein resides in the cytoplasm. The catalysed reaction is 7-aminomethyl-7-carbaguanine + 2 NADP(+) = 7-cyano-7-deazaguanine + 2 NADPH + 3 H(+). It participates in tRNA modification; tRNA-queuosine biosynthesis. Functionally, catalyzes the NADPH-dependent reduction of 7-cyano-7-deazaguanine (preQ0) to 7-aminomethyl-7-deazaguanine (preQ1). This chain is NADPH-dependent 7-cyano-7-deazaguanine reductase, found in Rhodopseudomonas palustris (strain HaA2).